Consider the following 118-residue polypeptide: UPF0102 protein STH1475 (118 aa).

The protein belongs to the UPF0102 family.

This Symbiobacterium thermophilum (strain DSM 24528 / JCM 14929 / IAM 14863 / T) protein is UPF0102 protein STH1475.